Consider the following 285-residue polypeptide: 2-dehydro-3-deoxyphosphooctonate aldolase (285 aa).

Belongs to the KdsA family.

The protein resides in the cytoplasm. The enzyme catalyses D-arabinose 5-phosphate + phosphoenolpyruvate + H2O = 3-deoxy-alpha-D-manno-2-octulosonate-8-phosphate + phosphate. It functions in the pathway carbohydrate biosynthesis; 3-deoxy-D-manno-octulosonate biosynthesis; 3-deoxy-D-manno-octulosonate from D-ribulose 5-phosphate: step 2/3. Its pathway is bacterial outer membrane biogenesis; lipopolysaccharide biosynthesis. In Leptothrix cholodnii (strain ATCC 51168 / LMG 8142 / SP-6) (Leptothrix discophora (strain SP-6)), this protein is 2-dehydro-3-deoxyphosphooctonate aldolase.